We begin with the raw amino-acid sequence, 1316 residues long: DNA-directed RNA polymerase subunit beta' (1316 aa).

The Zn(2+) site is built by Cys-60, Cys-62, Cys-75, and Cys-78. 3 residues coordinate Mg(2+): Asp-535, Asp-537, and Asp-539. The Zn(2+) site is built by Cys-891, Cys-968, Cys-975, and Cys-978.

Belongs to the RNA polymerase beta' chain family. As to quaternary structure, the RNAP catalytic core consists of 2 alpha, 1 beta, 1 beta' and 1 omega subunit. When a sigma factor is associated with the core the holoenzyme is formed, which can initiate transcription. Mg(2+) is required as a cofactor. The cofactor is Zn(2+).

It catalyses the reaction RNA(n) + a ribonucleoside 5'-triphosphate = RNA(n+1) + diphosphate. DNA-dependent RNA polymerase catalyzes the transcription of DNA into RNA using the four ribonucleoside triphosphates as substrates. This is DNA-directed RNA polymerase subunit beta' from Mycobacterium avium (strain 104).